The primary structure comprises 98 residues: Integration host factor subunit alpha (98 aa).

Positions 52 to 73 are disordered; the sequence is FDLREKNQRPGRNPKTGEDIPI.

The protein belongs to the bacterial histone-like protein family. Heterodimer of an alpha and a beta chain.

In terms of biological role, this protein is one of the two subunits of integration host factor, a specific DNA-binding protein that functions in genetic recombination as well as in transcriptional and translational control. This chain is Integration host factor subunit alpha, found in Aeromonas hydrophila subsp. hydrophila (strain ATCC 7966 / DSM 30187 / BCRC 13018 / CCUG 14551 / JCM 1027 / KCTC 2358 / NCIMB 9240 / NCTC 8049).